A 118-amino-acid chain; its full sequence is uncharacterized protein (118 aa).

The protein resides in the mitochondrion. This is an uncharacterized protein from Arabidopsis thaliana (Mouse-ear cress).